The primary structure comprises 345 residues: Biotin synthase (345 aa).

In terms of domain architecture, Radical SAM core spans proline 66 to arginine 291. The [4Fe-4S] cluster site is built by cysteine 81, cysteine 85, and cysteine 88. Residues cysteine 124, cysteine 157, cysteine 216, and arginine 286 each coordinate [2Fe-2S] cluster.

This sequence belongs to the radical SAM superfamily. Biotin synthase family. As to quaternary structure, homodimer. Requires [4Fe-4S] cluster as cofactor. [2Fe-2S] cluster is required as a cofactor.

The enzyme catalyses (4R,5S)-dethiobiotin + (sulfur carrier)-SH + 2 reduced [2Fe-2S]-[ferredoxin] + 2 S-adenosyl-L-methionine = (sulfur carrier)-H + biotin + 2 5'-deoxyadenosine + 2 L-methionine + 2 oxidized [2Fe-2S]-[ferredoxin]. The protein operates within cofactor biosynthesis; biotin biosynthesis; biotin from 7,8-diaminononanoate: step 2/2. In terms of biological role, catalyzes the conversion of dethiobiotin (DTB) to biotin by the insertion of a sulfur atom into dethiobiotin via a radical-based mechanism. This is Biotin synthase from Mycobacterium leprae (strain Br4923).